Consider the following 125-residue polypeptide: Ribonuclease P protein component (125 aa).

It belongs to the RnpA family. As to quaternary structure, consists of a catalytic RNA component (M1 or rnpB) and a protein subunit.

The catalysed reaction is Endonucleolytic cleavage of RNA, removing 5'-extranucleotides from tRNA precursor.. Functionally, RNaseP catalyzes the removal of the 5'-leader sequence from pre-tRNA to produce the mature 5'-terminus. It can also cleave other RNA substrates such as 4.5S RNA. The protein component plays an auxiliary but essential role in vivo by binding to the 5'-leader sequence and broadening the substrate specificity of the ribozyme. The sequence is that of Ribonuclease P protein component from Clostridium perfringens (strain ATCC 13124 / DSM 756 / JCM 1290 / NCIMB 6125 / NCTC 8237 / Type A).